The chain runs to 620 residues: Chaperone protein HscA homolog (620 aa).

The protein belongs to the heat shock protein 70 family.

In terms of biological role, chaperone involved in the maturation of iron-sulfur cluster-containing proteins. Has a low intrinsic ATPase activity which is markedly stimulated by HscB. This Shewanella oneidensis (strain ATCC 700550 / JCM 31522 / CIP 106686 / LMG 19005 / NCIMB 14063 / MR-1) protein is Chaperone protein HscA homolog.